A 538-amino-acid chain; its full sequence is Small ribosomal subunit protein uS3m (538 aa).

Positions serine 111 to isoleucine 134 are disordered. Basic and acidic residues predominate over residues asparagine 120–isoleucine 134.

This sequence belongs to the universal ribosomal protein uS3 family.

It localises to the mitochondrion. This Oryza sativa subsp. japonica (Rice) protein is Small ribosomal subunit protein uS3m (RPS3).